The following is a 156-amino-acid chain: Ribosomal RNA large subunit methyltransferase H (156 aa).

Residues Leu73, Gly104, and 123–128 (ISSMTL) each bind S-adenosyl-L-methionine.

This sequence belongs to the RNA methyltransferase RlmH family. In terms of assembly, homodimer.

It is found in the cytoplasm. It catalyses the reaction pseudouridine(1915) in 23S rRNA + S-adenosyl-L-methionine = N(3)-methylpseudouridine(1915) in 23S rRNA + S-adenosyl-L-homocysteine + H(+). Its function is as follows. Specifically methylates the pseudouridine at position 1915 (m3Psi1915) in 23S rRNA. This chain is Ribosomal RNA large subunit methyltransferase H, found in Burkholderia cenocepacia (strain HI2424).